Consider the following 569-residue polypeptide: Cell death protein 4 (569 aa).

The CARD domain maps to 1–91; it reads MLCEIECRAL…HLKDFLDEYL (91 aa). An NB-ARC domain is found at 116 to 442; it reads DRKLLLGNVP…IWSCVIPVDI (327 aa). ATP contacts are provided by residues phenylalanine 131, 162-167, and glutamine 171; that span reads GSGKSV. Serine 166 contacts Mg(2+).

Associates as an asymmetric homodimer with ced-9. Upon release from ced-9, forms an octamer, known as the apoptosome, and interacts with ced-3; the interaction results in ced-3 autoproteolytic cleavage and activation. The octamer (a tetramer of an asymmetric dimer) also interacts with two processed ced-3 to form a stable holoenzyme. Interacts with sex-determining protein fem-1. May form a complex composed of ced-3, ced-4 and mac-1 or of ced-9, ced-4 and mac-1. Within the complex, interacts with ced-4.

It localises to the mitochondrion. It is found in the cytoplasm. Its subcellular location is the perinuclear region. Plays a major role in programmed cell death (PCD, apoptosis). egl-1 binds to and directly inhibits the activity of ced-9, releasing the cell death activator ced-4 from a ced-9/ced-4 containing protein complex and allowing ced-4 to induce caspase ced-3 autoproteolytic cleavage and activation. Also forms a holoenzyme with processed ced-3 enhancing ced-3 activity. Component of the egl-1, ced-9, ced-4 and ced-3 apoptotic signaling cascade required for the initiation of programmed cell death in cells fated to die during embryonic and postembryonic development. During oogenesis, required for germline apoptosis downstream of ced-9 and upstream of ced-3 but independently of egl-1. May regulate germline apoptosis in response to DNA damage, probably downstream of let-60/ras and mpk-1 pathway. Regulates CEP neuron apoptosis in response to high Al(3+) levels. During male tail morphogenesis, promotes apoptosis of the tail-spike cell. During larval development, required for the elimination of transient presynaptic components downstream of egl-1 and ced-9 and upstream of ced-3 apoptotic pathway. Together with ain-1, a component of the miRNA-induced-silencing complex (miRISC), and probably upstream of ced-3, regulates temporal cell fate patterning during larval development. May play a role in resistance to S.typhimurium-mediated infection. The chain is Cell death protein 4 from Caenorhabditis briggsae.